Reading from the N-terminus, the 214-residue chain is Thymidylate kinase (214 aa).

9-16 contributes to the ATP binding site; that stretch reads GVDGSGKS.

Belongs to the thymidylate kinase family.

It catalyses the reaction dTMP + ATP = dTDP + ADP. Phosphorylation of dTMP to form dTDP in both de novo and salvage pathways of dTTP synthesis. This is Thymidylate kinase from Symbiobacterium thermophilum (strain DSM 24528 / JCM 14929 / IAM 14863 / T).